We begin with the raw amino-acid sequence, 155 residues long: MLPFKLWVDADALPKILREVILRASDRYQLEVIFVANQNVGITPSVRIKSLQVLSGADQADQEIVNRMSENDIVITQDIPLAAQVIEKGGIAIHPRGEVYTTANVKARLHLRDFMDTLRGAGVQTGGPPPISERDKREFSSALDQTILKQKRKTA.

The interval G120–A155 is disordered.

This sequence belongs to the UPF0178 family.

The chain is UPF0178 protein ACICU_02858 from Acinetobacter baumannii (strain ACICU).